Here is a 259-residue protein sequence, read N- to C-terminus: Malonyl-[acyl-carrier protein] O-methyltransferase (259 aa).

It belongs to the methyltransferase superfamily.

The catalysed reaction is malonyl-[ACP] + S-adenosyl-L-methionine = malonyl-[ACP] methyl ester + S-adenosyl-L-homocysteine. The protein operates within cofactor biosynthesis; biotin biosynthesis. In terms of biological role, converts the free carboxyl group of a malonyl-thioester to its methyl ester by transfer of a methyl group from S-adenosyl-L-methionine (SAM). It allows to synthesize pimeloyl-ACP via the fatty acid synthetic pathway. In Anoxybacillus flavithermus (strain DSM 21510 / WK1), this protein is Malonyl-[acyl-carrier protein] O-methyltransferase.